The following is a 164-amino-acid chain: Terminase, small subunit (164 aa).

A helix-turn-helix (HTH) region spans residues 1-35 (MEGLDINKLLDISDLPGIDGEEIKVYEPLQLVEVK). The segment at 1-35 (MEGLDINKLLDISDLPGIDGEEIKVYEPLQLVEVK) is interaction with gp17. The interval 36–114 (SNPQNRTPDL…KDMKDITSEQ (79 aa)) is oligomerization. The segment at 115 to 164 (VGTKGAVPTGQMNIQNATVFMGSPTELMDEIGDAYEAQEAREKVINGTTD) is interaction with gp17.

Homooctamer. Interacts with the terminase large subunit gp17; the active complex is probably heterooligomeric.

The terminase small subunit binds to the packaging initiation site and regulates the ATPase activity of the terminase large subunit. The terminase lies at a unique vertex of the procapsid and is composed of two subunits, a small terminase subunit involved in viral DNA recognition (packaging 'pac' sequence), and a large terminase subunit possessing endonucleolytic and ATPase activities. Both terminase subunits heterooligomerize and are docked on the portal protein to form the packaging machine. The terminase large subunit exhibits endonuclease activity and cleaves the viral genome concatemer once the capsid is full (headful packaging). Once the capsid is packaged with the DNA, the terminase complex is substituted by neck proteins. The protein is Terminase, small subunit (16) of Enterobacteria phage T4 (Bacteriophage T4).